The chain runs to 565 residues: Formate--tetrahydrofolate ligase (565 aa).

67–74 (TPLGEGKT) contributes to the ATP binding site.

The protein belongs to the formate--tetrahydrofolate ligase family.

It catalyses the reaction (6S)-5,6,7,8-tetrahydrofolate + formate + ATP = (6R)-10-formyltetrahydrofolate + ADP + phosphate. The protein operates within one-carbon metabolism; tetrahydrofolate interconversion. This Saccharopolyspora erythraea (strain ATCC 11635 / DSM 40517 / JCM 4748 / NBRC 13426 / NCIMB 8594 / NRRL 2338) protein is Formate--tetrahydrofolate ligase.